Here is a 346-residue protein sequence, read N- to C-terminus: NADH-cytochrome b5 reductase 2 (346 aa).

A helical transmembrane segment spans residues 28 to 50; sequence GGSNAALYAGLAAAAGAGAYYFL. One can recognise an FAD-binding FR-type domain in the interval 95-200; the sequence is QGFISLKLDS…KGPIPKYPWS (106 aa). 203–238 contributes to the FAD binding site; sequence KHDHIALIAGGTGITPMYQLARAIFNNPADKTKVTL.

Belongs to the flavoprotein pyridine nucleotide cytochrome reductase family. The cofactor is FAD.

Its subcellular location is the mitochondrion outer membrane. The catalysed reaction is 2 Fe(III)-[cytochrome b5] + NADH = 2 Fe(II)-[cytochrome b5] + NAD(+) + H(+). In terms of biological role, may mediate the reduction of outer membrane cytochrome b5. In Botryotinia fuckeliana (strain B05.10) (Noble rot fungus), this protein is NADH-cytochrome b5 reductase 2 (mcr1).